Here is a 377-residue protein sequence, read N- to C-terminus: SH2/SH3 adapter protein NCK1 (377 aa).

Residue alanine 2 is modified to N-acetylalanine. Residues 2–61 (AEEVVVVAKFDYVAQQEQELDIKKNERLWLLDDSKSWWRVRNSMNKTGFVPSNYVERKNS) enclose the SH3 1 domain. A phosphoserine mark is found at serine 85, serine 89, serine 91, and serine 96. Tyrosine 105 is subject to Phosphotyrosine. Residues 106–165 (DLNMPAYVKFNYMAEREDELSLIKGTKVIVMEKCSDGWWRGSYNGQVGWFPSNYVTEEGD) form the SH3 2 domain. Serine 166 is subject to Phosphoserine. The region spanning 190–252 (QVLHVVQALY…PKNYVTVMQN (63 aa)) is the SH3 3 domain. An SH2 domain is found at 282–376 (WYYGKVTRHQ…GEKLYLVKHL (95 aa)).

In terms of assembly, interacts (via SH2 domain and SH3 domain 2) with EGFR. Interacts with PAK1 and SOS1. Interacts (via SH3 domains) with PKN2. Associates with BLNK, PLCG1, VAV1 and NCK1 in a B-cell antigen receptor-dependent fashion. Interacts with SOCS7. This interaction is required for nuclear import. Part of a complex containing PPP1R15B, PP1 and NCK1. Interacts with RALGPS1. Interacts with CAV2 (tyrosine phosphorylated form). Interacts with ADAM15. Interacts with FASLG. Directly interacts with RASA1. Interacts with isoform 4 of MINK1. Interacts with FLT1 (tyrosine phosphorylated). Interacts with KDR (tyrosine phosphorylated). Interacts (via SH2 domain) with EPHB1; activates the JUN cascade to regulate cell adhesion. Interacts with EPHA2. Interacts (via SH2 domain) with PDGFRB (tyrosine phosphorylated). Interacts with the inactive form of EIF2AK2/PKR. Interacts with PTPN1. Interacts with INSR/insulin receptor (in response to insulin stimulation); This interaction may mediate PTPN1 recruitment leading to INSR dephosphorylation. Interacts with IRS1. Post-translationally, phosphorylated on Ser and Tyr residues. Phosphorylated in response to activation of EGFR and FcERI. Phosphorylated by activated PDGFRB.

The protein resides in the cytoplasm. It is found in the endoplasmic reticulum. The protein localises to the nucleus. Functionally, adapter protein which associates with tyrosine-phosphorylated growth factor receptors, such as KDR and PDGFRB, or their cellular substrates. Maintains low levels of EIF2S1 phosphorylation by promoting its dephosphorylation by PP1. Plays a role in the DNA damage response, not in the detection of the damage by ATM/ATR, but for efficient activation of downstream effectors, such as that of CHEK2. Plays a role in ELK1-dependent transcriptional activation in response to activated Ras signaling. Modulates the activation of EIF2AK2/PKR by dsRNA. May play a role in cell adhesion and migration through interaction with ephrin receptors. The polypeptide is SH2/SH3 adapter protein NCK1 (NCK1) (Homo sapiens (Human)).